The chain runs to 527 residues: Cytochrome P450 monooxygenase aba2 (527 aa).

A helical membrane pass occupies residues 26–46; that stretch reads TTVAVLVTVALIAQVLWKIFF. N-linked (GlcNAc...) asparagine glycans are attached at residues N189, N420, and N448. Position 460 (C460) interacts with heme. N-linked (GlcNAc...) asparagine glycosylation is present at N464.

The protein belongs to the cytochrome P450 family. It depends on heme as a cofactor.

It localises to the membrane. Its pathway is hormone biosynthesis. Its function is as follows. Cytochrome P450 monooxygenase; part of the gene cluster that mediates the biosynthesis of abscisic acid (ABA), a phytohormone that acts antagonistically toward salicylic acid (SA), jasmonic acid (JA) and ethylene (ETH) signaling, to impede plant defense responses. The first step of the pathway catalyzes the reaction from farnesyl diphosphate to alpha-ionylideneethane performed by the alpha-ionylideneethane synthase aba3 via a three-step reaction mechanism involving 2 neutral intermediates, beta-farnesene and allofarnesene. The cytochrome P450 monooxygenase aba1 might then be involved in the conversion of alpha-ionylideneethane to alpha-ionylideneacetic acid. Alpha-ionylideneacetic acid is further converted to abscisic acid in 2 steps involving the cytochrome P450 monooxygenase aba2 and the short-chain dehydrogenase/reductase aba4, via the intermediates 1'-deoxy-ABA or 1',4'-trans-diol-ABA, depending on the order of action of these 2 enzymes. Aba2 is responsible for the hydroxylation of carbon atom C-1' and aba4 might be involved in the oxidation of the C-4' carbon atom. The polypeptide is Cytochrome P450 monooxygenase aba2 (aba2) (Botryotinia fuckeliana (strain B05.10) (Noble rot fungus)).